A 326-amino-acid chain; its full sequence is Type II methyltransferase M.EcoRI (326 aa).

This sequence belongs to the N(4)/N(6)-methyltransferase family. As to quaternary structure, monomer.

It catalyses the reaction a 2'-deoxyadenosine in DNA + S-adenosyl-L-methionine = an N(6)-methyl-2'-deoxyadenosine in DNA + S-adenosyl-L-homocysteine + H(+). Its function is as follows. A methylase that recognizes the double-stranded sequence 5'-GAATTC-3', methylates A-3 on both strands, and protects the DNA from cleavage by the EcoRI endonuclease. This is Type II methyltransferase M.EcoRI (ecoRIM) from Escherichia coli.